A 355-amino-acid chain; its full sequence is DNA-directed RNA polymerase subunit alpha (355 aa).

An alpha N-terminal domain (alpha-NTD) region spans residues 1 to 248 (MYYDDGIPVF…EQLQPFISSD (248 aa)). Residues 267-355 (YDPILLRKVD…ELARQHTDED (89 aa)) are alpha C-terminal domain (alpha-CTD).

Belongs to the RNA polymerase alpha chain family. As to quaternary structure, homodimer. The RNAP catalytic core consists of 2 alpha, 1 beta, 1 beta' and 1 omega subunit. When a sigma factor is associated with the core the holoenzyme is formed, which can initiate transcription.

It carries out the reaction RNA(n) + a ribonucleoside 5'-triphosphate = RNA(n+1) + diphosphate. Its function is as follows. DNA-dependent RNA polymerase catalyzes the transcription of DNA into RNA using the four ribonucleoside triphosphates as substrates. This is DNA-directed RNA polymerase subunit alpha from Wolbachia sp. subsp. Brugia malayi (strain TRS).